The following is a 200-amino-acid chain: Molybdenum cofactor guanylyltransferase (200 aa).

Residues 15 to 17 (LAG), K28, D74, and D104 contribute to the GTP site. D104 contributes to the Mg(2+) binding site.

The protein belongs to the MobA family. As to quaternary structure, monomer. Mg(2+) is required as a cofactor.

The protein localises to the cytoplasm. It carries out the reaction Mo-molybdopterin + GTP + H(+) = Mo-molybdopterin guanine dinucleotide + diphosphate. Functionally, transfers a GMP moiety from GTP to Mo-molybdopterin (Mo-MPT) cofactor (Moco or molybdenum cofactor) to form Mo-molybdopterin guanine dinucleotide (Mo-MGD) cofactor. The sequence is that of Molybdenum cofactor guanylyltransferase from Pseudomonas fluorescens (strain Pf0-1).